The primary structure comprises 239 residues: Lactate utilization protein A (239 aa).

The protein belongs to the LutA/YkgE family.

Its function is as follows. Is involved in L-lactate degradation and allows cells to grow with lactate as the sole carbon source. In Bacillus cereus (strain B4264), this protein is Lactate utilization protein A.